The sequence spans 195 residues: Transcriptional regulator GfcR (195 aa).

Belongs to the purine/pyrimidine phosphoribosyltransferase family. GfcR subfamily.

In Picrophilus torridus (strain ATCC 700027 / DSM 9790 / JCM 10055 / NBRC 100828 / KAW 2/3), this protein is Transcriptional regulator GfcR.